A 279-amino-acid chain; its full sequence is Large ribosomal subunit protein uL2 (279 aa).

Disordered stretches follow at residues 1-59 (MGIR…GGHK) and 224-279 (VAMN…KNKR). 2 stretches are compositionally biased toward basic residues: residues 50–59 (TTRHKGGGHK) and 269–279 (VRRRRTGKNKR).

Belongs to the universal ribosomal protein uL2 family. Part of the 50S ribosomal subunit. Forms a bridge to the 30S subunit in the 70S ribosome.

Functionally, one of the primary rRNA binding proteins. Required for association of the 30S and 50S subunits to form the 70S ribosome, for tRNA binding and peptide bond formation. It has been suggested to have peptidyltransferase activity; this is somewhat controversial. Makes several contacts with the 16S rRNA in the 70S ribosome. In Arthrobacter sp. (strain FB24), this protein is Large ribosomal subunit protein uL2.